The primary structure comprises 317 residues: Zinc metalloproteinase/disintegrin (317 aa).

Residues 1–26 (EAPKMCGVTQNWESYEPIKKASQSNL) constitute a propeptide that is removed on maturation. A Peptidase M12B domain is found at 32–228 (RYIELVIVAD…QKPQCILNKP (197 aa)). Glutamate 35 and aspartate 119 together coordinate Ca(2+). Cystine bridges form between cysteine 143–cysteine 223, cysteine 183–cysteine 207, and cysteine 185–cysteine 190. Position 168 (histidine 168) interacts with Zn(2+). Glutamate 169 is a catalytic residue. Residues histidine 172 and histidine 178 each coordinate Zn(2+). 2 residues coordinate Ca(2+): cysteine 223 and asparagine 226. Residues 229 to 244 (LRTDTVSTPVSGNELL) constitute a propeptide that is removed on maturation. A Disintegrin domain is found at 236-317 (TPVSGNELLE…AGCPRNPFHA (82 aa)). Intrachain disulfides connect cysteine 250-cysteine 259, cysteine 252-cysteine 260, cysteine 265-cysteine 279, cysteine 273-cysteine 303, cysteine 278-cysteine 282, and cysteine 291-cysteine 310. The short motif at 295–297 (RGD) is the Cell attachment site element.

It belongs to the venom metalloproteinase (M12B) family. P-II subfamily. P-IIa sub-subfamily. Monomer. Zn(2+) serves as cofactor. In terms of tissue distribution, expressed by the venom gland.

The protein localises to the secreted. Metalloproteinase that impairs hemostasis in the envenomed animal. Functionally, inhibits GPIIb/GPIIIa (ITGA2B/ITGB3) binding to immobilized fibrinogen with an IC(50) of 2.2 nM and ADP-induced platelet aggregation with an IC(50) of 131 nM, respectively. Inhibits angiogenesis. By binding to vitronectin receptor (alpha-V/beta-3 (ITGAV/ITGB3)), also induces apoptosis of endothelial cells by blocking their attachment to extracellular matrix proteins. In terms of biological role, inhibits platelet aggregation induced by ADP (IC(50) is 30 nM), collagen (IC(50) is 500 nM), thrombin and epinephrin (IC(50) is 160 nM). The chain is Zinc metalloproteinase/disintegrin from Gloydius brevicauda (Korean slamosa snake).